Reading from the N-terminus, the 377-residue chain is ATP synthase gamma chain, chloroplastic (377 aa).

The transit peptide at 1–55 (MSCSNLTMLVSSKPSLSDSSALSFRSSVSPFQLPNHNTSGPSNPSRSSSVTPVHC) directs the protein to the chloroplast. A disordered region spans residues 30–52 (PFQLPNHNTSGPSNPSRSSSVTP). Residues 37 to 52 (NTSGPSNPSRSSSVTP) show a composition bias toward low complexity. C143 is a catalytic residue. A disulfide bridge links C253 with C259.

It belongs to the ATPase gamma chain family. As to quaternary structure, F-type ATPases have 2 components, CF(1) - the catalytic core - and CF(0) - the membrane proton channel. CF(1) has five subunits: alpha(3), beta(3), gamma(1), delta(1), epsilon(1). CF(0) has four main subunits: a, b, b' and c.

It is found in the plastid. Its subcellular location is the chloroplast thylakoid membrane. Produces ATP from ADP in the presence of a proton gradient across the membrane. The gamma chain is believed to be important in regulating ATPase activity and the flow of protons through the CF(0) complex. The sequence is that of ATP synthase gamma chain, chloroplastic (ATPC) from Nicotiana tabacum (Common tobacco).